The chain runs to 171 residues: UPF0260 protein Nham_1404 (171 aa).

This sequence belongs to the UPF0260 family.

This is UPF0260 protein Nham_1404 from Nitrobacter hamburgensis (strain DSM 10229 / NCIMB 13809 / X14).